The following is a 307-amino-acid chain: Methionyl-tRNA formyltransferase (307 aa).

109–112 is a (6S)-5,6,7,8-tetrahydrofolate binding site; that stretch reads SMLP.

It belongs to the Fmt family.

The catalysed reaction is L-methionyl-tRNA(fMet) + (6R)-10-formyltetrahydrofolate = N-formyl-L-methionyl-tRNA(fMet) + (6S)-5,6,7,8-tetrahydrofolate + H(+). In terms of biological role, attaches a formyl group to the free amino group of methionyl-tRNA(fMet). The formyl group appears to play a dual role in the initiator identity of N-formylmethionyl-tRNA by promoting its recognition by IF2 and preventing the misappropriation of this tRNA by the elongation apparatus. The sequence is that of Methionyl-tRNA formyltransferase from Orientia tsutsugamushi (strain Boryong) (Rickettsia tsutsugamushi).